Here is a 491-residue protein sequence, read N- to C-terminus: Peptidyl-prolyl isomerase CWC27 (491 aa).

In terms of domain architecture, PPIase cyclophilin-type spans 11–167; sequence TNGKVIIDTT…IPPKIRRIHI (157 aa). Basic and acidic residues-rich tracts occupy residues 186 to 202, 268 to 298, and 306 to 316; these read AQQK…EQRE, DLGK…REKA, and AEIKRMEEDLR. 2 disordered regions span residues 186–427 and 464–491; these read AQQK…IEVD and RDLL…GRNR. Residues 277–327 adopt a coiled-coil conformation; sequence ASEEKKAVDLKNIRAQHEREKAGGSAARQAEIKRMEEDLRRLKKRSGSVSD. The segment covering 323–333 has biased composition (low complexity); sequence GSVSDSESDSS. The segment covering 352-367 has biased composition (basic residues); the sequence is ASKRGRAAMKAGNKRG. 2 stretches are compositionally biased toward acidic residues: residues 391 to 406 and 418 to 427; these read DEPE…EGEA and AEEEGGIEVD. A compositionally biased stretch (basic residues) spans 482-491; the sequence is RTVRNSGRNR.

The protein belongs to the cyclophilin-type PPIase family. CWC27 subfamily. As to quaternary structure, associated with the spliceosome.

The protein localises to the cytoplasm. It is found in the nucleus. It carries out the reaction [protein]-peptidylproline (omega=180) = [protein]-peptidylproline (omega=0). Its function is as follows. PPIases accelerate the folding of proteins. It catalyzes the cis-trans isomerization of proline imidic peptide bonds in oligopeptides. Involved in pre-mRNA splicing. The sequence is that of Peptidyl-prolyl isomerase CWC27 (CWC27) from Cryptococcus neoformans var. neoformans serotype D (strain B-3501A) (Filobasidiella neoformans).